The following is a 319-amino-acid chain: Ribosomal RNA small subunit methyltransferase H (319 aa).

S-adenosyl-L-methionine-binding positions include glycine 52–histidine 54, aspartate 70, phenylalanine 100, aspartate 126, and glutamine 133. The interval proline 289–methionine 319 is disordered.

It belongs to the methyltransferase superfamily. RsmH family.

It localises to the cytoplasm. It carries out the reaction cytidine(1402) in 16S rRNA + S-adenosyl-L-methionine = N(4)-methylcytidine(1402) in 16S rRNA + S-adenosyl-L-homocysteine + H(+). Specifically methylates the N4 position of cytidine in position 1402 (C1402) of 16S rRNA. This chain is Ribosomal RNA small subunit methyltransferase H, found in Synechococcus sp. (strain JA-2-3B'a(2-13)) (Cyanobacteria bacterium Yellowstone B-Prime).